Consider the following 311-residue polypeptide: Long form salivary protein D7L1 (311 aa).

The N-terminal stretch at 1-21 is a signal peptide; that stretch reads MIVTGVLLFILLELFAQGSQA. Disulfide bonds link cysteine 37–cysteine 73, cysteine 69–cysteine 128, cysteine 178–cysteine 211, and cysteine 252–cysteine 263.

Belongs to the PBP/GOBP family.

It localises to the secreted. Modulates blood feeding of female mosquitoes on vertebrate species by binding and sequestering different mediators involved in the host response. Binds leukotriene C4 and U-46619, a stable analog of thromboxane A2. Inhibits agonist-induced platelet aggregation. Exhibits vasodilating activity. The chain is Long form salivary protein D7L1 from Anopheles gambiae (African malaria mosquito).